The sequence spans 1485 residues: Chromosome partition protein MukB (1485 aa).

G34–S41 serves as a coordination point for ATP. Coiled-coil stretches lie at residues L337–Q480 and Q509–L605. The segment at P666–R783 is flexible hinge. 2 coiled-coil regions span residues E835 to H915 and G977 to G1116.

It belongs to the SMC family. MukB subfamily. As to quaternary structure, homodimerization via its hinge domain. Binds to DNA via its C-terminal region. Interacts, and probably forms a ternary complex, with MukE and MukF via its C-terminal region. The complex formation is stimulated by calcium or magnesium. Interacts with tubulin-related protein FtsZ.

Its subcellular location is the cytoplasm. It localises to the nucleoid. Functionally, plays a central role in chromosome condensation, segregation and cell cycle progression. Functions as a homodimer, which is essential for chromosome partition. Involved in negative DNA supercoiling in vivo, and by this means organize and compact chromosomes. May achieve or facilitate chromosome segregation by condensation DNA from both sides of a centrally located replisome during cell division. This Yersinia pseudotuberculosis serotype IB (strain PB1/+) protein is Chromosome partition protein MukB.